The primary structure comprises 324 residues: NADH-dependent D-xylose reductase (324 aa).

Y54 serves as the catalytic Proton donor. Residue H116 participates in substrate binding. 220-286 lines the NAD(+) pocket; that stretch reads SSFGPQSFLE…SNSPDRMAQN (67 aa).

Belongs to the aldo/keto reductase family.

It carries out the reaction xylitol + NAD(+) = D-xylose + NADH + H(+). The enzyme catalyses xylitol + NADP(+) = D-xylose + NADPH + H(+). Its pathway is carbohydrate metabolism; D-xylose degradation. In terms of biological role, reduces D-xylose into xylitol. Preferentially utilizes NADH as a cosubstrate. The protein is NADH-dependent D-xylose reductase (XYL1) of Candida parapsilosis (Yeast).